The following is a 205-amino-acid chain: Peptidyl-tRNA hydrolase (205 aa).

Tyr18 contributes to the tRNA binding site. The active-site Proton acceptor is the His23. Residues Tyr69, Asn71, and Asn117 each contribute to the tRNA site.

It belongs to the PTH family. Monomer.

The protein resides in the cytoplasm. The catalysed reaction is an N-acyl-L-alpha-aminoacyl-tRNA + H2O = an N-acyl-L-amino acid + a tRNA + H(+). Functionally, hydrolyzes ribosome-free peptidyl-tRNAs (with 1 or more amino acids incorporated), which drop off the ribosome during protein synthesis, or as a result of ribosome stalling. Catalyzes the release of premature peptidyl moieties from peptidyl-tRNA molecules trapped in stalled 50S ribosomal subunits, and thus maintains levels of free tRNAs and 50S ribosomes. The sequence is that of Peptidyl-tRNA hydrolase from Synechococcus sp. (strain CC9605).